Reading from the N-terminus, the 510-residue chain is MSDASAETAIRPTRAENFSEWYLEVIKAADLAESSSVRGCMVIKPWGYALWEHVQRVLDGMFKATGHVNAYFPLFIPLSLLEKEAAHVEGFAKECAVVTHHRLEARDGKLVPVGELEEPLIVRPTSETIIGESFARWVQSYRDLPLLINQWANVVRWEMRTRMFLRTAEFLWQEGHTAHATEPEAIDETMQMLGIYARFAEEWMALPVVQGEKTESERFPGAVRTYCIEAMMQDRKALQAGTSHFLGQNFAKASGIQFQDEKGTLTHAWTTSWGLSTRMIGAMIMTHGDDDGMVCPPRLAPQQVVIIPVIQKPEVREQVLAWCTALKRELEAQTYAGAPVRVHLDARDLQGAKKSWEWIKKGTPVRLEVGPRDIEKGAVFMGRRDRKPREKQSVPRAELVAGVGALLQEIQDALLERARTMRAAHTRVIDTKDEFYAYFTPPPTRRPNDPTPIHGGFALAHFAGDPAVEARIKEDLGVTVRCIPLEPGEPGTCAFTGQPSPKRVVWAKSY.

This sequence belongs to the class-II aminoacyl-tRNA synthetase family. ProS type 3 subfamily. As to quaternary structure, homodimer.

It localises to the cytoplasm. It catalyses the reaction tRNA(Pro) + L-proline + ATP = L-prolyl-tRNA(Pro) + AMP + diphosphate. Catalyzes the attachment of proline to tRNA(Pro) in a two-step reaction: proline is first activated by ATP to form Pro-AMP and then transferred to the acceptor end of tRNA(Pro). This is Proline--tRNA ligase 2 from Anaeromyxobacter dehalogenans (strain 2CP-C).